The following is a 331-amino-acid chain: Oxygen-evolving enhancer protein 1-2, chloroplastic (331 aa).

A chloroplast-targeting transit peptide spans 1-57 (MATSLQAAATFLQPAKIAASPSRNVHLRSNQTVGKSFGLDSSQARLTCSLHSDLKDF). A thylakoid-targeting transit peptide spans 58–84 (AGKCSDAAKIAGFALATSALVVSGAGA).

The protein belongs to the PsbO family.

It localises to the plastid. The protein localises to the chloroplast thylakoid membrane. In terms of biological role, stabilizes the manganese cluster which is the primary site of water splitting. Regulates dephosphorylation and turnover of the PSII reaction center D1 protein. In Arabidopsis thaliana (Mouse-ear cress), this protein is Oxygen-evolving enhancer protein 1-2, chloroplastic (PSBO2).